A 156-amino-acid chain; its full sequence is Small ribosomal subunit protein uS7 (156 aa).

Belongs to the universal ribosomal protein uS7 family. As to quaternary structure, part of the 30S ribosomal subunit. Contacts proteins S9 and S11.

Functionally, one of the primary rRNA binding proteins, it binds directly to 16S rRNA where it nucleates assembly of the head domain of the 30S subunit. Is located at the subunit interface close to the decoding center, probably blocks exit of the E-site tRNA. This chain is Small ribosomal subunit protein uS7, found in Bradyrhizobium sp. (strain BTAi1 / ATCC BAA-1182).